A 946-amino-acid chain; its full sequence is Bifunctional glutamine synthetase adenylyltransferase/adenylyl-removing enzyme (946 aa).

The tract at residues 1–440 is adenylyl removase; the sequence is MKPLSSPLQQ…VFNELIGDDE (440 aa). Residues 449–946 form an adenylyl transferase region; sequence SEQWRELWQD…ASWQKWLVEE (498 aa).

Belongs to the GlnE family. It depends on Mg(2+) as a cofactor.

The enzyme catalyses [glutamine synthetase]-O(4)-(5'-adenylyl)-L-tyrosine + phosphate = [glutamine synthetase]-L-tyrosine + ADP. The catalysed reaction is [glutamine synthetase]-L-tyrosine + ATP = [glutamine synthetase]-O(4)-(5'-adenylyl)-L-tyrosine + diphosphate. Its function is as follows. Involved in the regulation of glutamine synthetase GlnA, a key enzyme in the process to assimilate ammonia. When cellular nitrogen levels are high, the C-terminal adenylyl transferase (AT) inactivates GlnA by covalent transfer of an adenylyl group from ATP to specific tyrosine residue of GlnA, thus reducing its activity. Conversely, when nitrogen levels are low, the N-terminal adenylyl removase (AR) activates GlnA by removing the adenylyl group by phosphorolysis, increasing its activity. The regulatory region of GlnE binds the signal transduction protein PII (GlnB) which indicates the nitrogen status of the cell. The polypeptide is Bifunctional glutamine synthetase adenylyltransferase/adenylyl-removing enzyme (Shigella sonnei (strain Ss046)).